Here is a 444-residue protein sequence, read N- to C-terminus: Phosphoglucosamine mutase (444 aa).

The active-site Phosphoserine intermediate is serine 102. Residues serine 102, aspartate 241, aspartate 243, and aspartate 245 each coordinate Mg(2+). Serine 102 is modified (phosphoserine).

The protein belongs to the phosphohexose mutase family. Mg(2+) is required as a cofactor. Activated by phosphorylation.

The enzyme catalyses alpha-D-glucosamine 1-phosphate = D-glucosamine 6-phosphate. Functionally, catalyzes the conversion of glucosamine-6-phosphate to glucosamine-1-phosphate. This is Phosphoglucosamine mutase from Buchnera aphidicola subsp. Acyrthosiphon pisum (strain 5A).